A 100-amino-acid polypeptide reads, in one-letter code: uncharacterized protein (100 aa).

This is an uncharacterized protein from Archaeoglobus fulgidus (strain ATCC 49558 / DSM 4304 / JCM 9628 / NBRC 100126 / VC-16).